The primary structure comprises 486 residues: Aspartyl/glutamyl-tRNA(Asn/Gln) amidotransferase subunit B (486 aa).

This sequence belongs to the GatB/GatE family. GatB subfamily. Heterotrimer of A, B and C subunits.

The enzyme catalyses L-glutamyl-tRNA(Gln) + L-glutamine + ATP + H2O = L-glutaminyl-tRNA(Gln) + L-glutamate + ADP + phosphate + H(+). It catalyses the reaction L-aspartyl-tRNA(Asn) + L-glutamine + ATP + H2O = L-asparaginyl-tRNA(Asn) + L-glutamate + ADP + phosphate + 2 H(+). In terms of biological role, allows the formation of correctly charged Asn-tRNA(Asn) or Gln-tRNA(Gln) through the transamidation of misacylated Asp-tRNA(Asn) or Glu-tRNA(Gln) in organisms which lack either or both of asparaginyl-tRNA or glutaminyl-tRNA synthetases. The reaction takes place in the presence of glutamine and ATP through an activated phospho-Asp-tRNA(Asn) or phospho-Glu-tRNA(Gln). This is Aspartyl/glutamyl-tRNA(Asn/Gln) amidotransferase subunit B from Herminiimonas arsenicoxydans.